Here is a 397-residue protein sequence, read N- to C-terminus: pH-sensitive adenylate cyclase MT1302 (397 aa).

A regulatory domain region spans residues 1-191 (MTDHVREADD…IQDMLFMQLR (191 aa)). The linker stretch occupies residues 192–206 (HMMETEAVNAGERAA). The catalytic domain stretch occupies residues 211-397 (PGARQVTVAF…QDDDLAGSSP (187 aa)). One can recognise a Guanylate cyclase domain in the interval 217–325 (TVAFADLVGF…SPVNVASRVT (109 aa)). Residue Asp-222 coordinates Mn(2+). Lys-261 is a substrate binding site. Asp-265 serves as a coordination point for Mn(2+). An ATP-binding site is contributed by Arg-298. Residue Asp-312 participates in substrate binding.

This sequence belongs to the adenylyl cyclase class-4/guanylyl cyclase family. As to quaternary structure, homodimer. Requires Mn(2+) as cofactor. Mg(2+) is required as a cofactor.

The enzyme catalyses ATP = 3',5'-cyclic AMP + diphosphate. Functionally, catalyzes the formation of the second messenger cAMP. This Mycobacterium tuberculosis (strain CDC 1551 / Oshkosh) protein is pH-sensitive adenylate cyclase MT1302.